A 673-amino-acid polypeptide reads, in one-letter code: Polyunsaturated fatty acid 5-lipoxygenase (673 aa).

Residues 2–117 form the PLAT domain; that stretch reads PSYTVTVATG…EIVLRDGRAK (116 aa). Ca(2+)-binding residues include Gly17, Thr18, Asp19, Asn44, Asp45, Glu47, Asp79, and Asp80. The Lipoxygenase domain maps to 118–673; sequence LARDDQIHIL…PDRIPNSVAI (556 aa). Position 271 is a phosphoserine (Ser271). Residues His367 and His372 each contribute to the Fe cation site. Ser523 carries the post-translational modification Phosphoserine. Fe cation contacts are provided by His550, Asn554, and Ile673.

It belongs to the lipoxygenase family. Homodimer. Interacts with ALOX5AP and LTC4S. Interacts with COTL1, the interaction is required for stability and efficient catalytic activity. Interacts with PIK3R1; this interaction bridges ALOX5 with CD40 after CD40 ligation in B cells and leads to the production of reactive oxygen species (ROS). Interacts (via PLAT domain) with DICER1 (via Dicer dsRNA-binding fold domain); this interaction enhances arachidonate 5-lipoxygenase activity and modifies the miRNA precursor processing activity of DICER1. Requires Fe cation as cofactor. Post-translationally, serine phosphorylation by MAPKAPK2 is stimulated by arachidonic acid. Phosphorylation on Ser-523 by PKA has an inhibitory effect. Phosphorylation on Ser-271 prevents export from the nucleus. Phosphorylation at Ser-523 is stimulated by 8-bromo-3',5'-cyclic AMP or prostaglandin E2.

It is found in the cytoplasm. The protein resides in the nucleus matrix. It localises to the nucleus membrane. The protein localises to the perinuclear region. Its subcellular location is the cytosol. It is found in the nucleus envelope. The protein resides in the nucleus intermembrane space. It carries out the reaction (5Z,8Z,11Z,14Z)-eicosatetraenoate + O2 = leukotriene A4 + H2O. The catalysed reaction is 18-HEPE + O2 = (5S)-hydroperoxy-18-hydroxy-(7E,9E,11Z,14Z,16E)-eicosapentaenoate. It catalyses the reaction (18R)-hydroxy-(5Z,8Z,11Z,14Z,16E)-eicosapentaenoate + O2 = (5S)-hydroperoxy-(18R)-hydroxy-(6E,8Z,11Z,14Z,16E)-eicosapentaenoate. The enzyme catalyses (18S)-hydroxy-(5Z,8Z,11Z,14Z,16E)-eicosapentaenoate + O2 = (5S)-hydroperoxy-(18S)-hydroxy-(6E,8Z,11Z,14Z,16E)-eicosapentaenoate. It carries out the reaction (5S)-hydroperoxy-(18S)-hydroxy-(6E,8Z,11Z,14Z,16E)-eicosapentaenoate = (5S,6S)-epoxy-(18S)-hydroxy-(7E,9E,11Z,14Z,16E)-eicosapentaenoate + H2O. The catalysed reaction is (5S)-hydroperoxy-(18R)-hydroxy-(6E,8Z,11Z,14Z,16E)-eicosapentaenoate = (5S,6S)-epoxy-(18R)-hydroxy-(7E,9E,11Z,14Z,16E)-eicosapentaenoate + H2O. It catalyses the reaction (5S)-hydroperoxy-18-hydroxy-(7E,9E,11Z,14Z,16E)-eicosapentaenoate = (5S,6S)-epoxy-18-hydroxy-(7E,9E,11Z,14Z,16E)-eicosapentaenoate + H2O. The enzyme catalyses (5Z,8Z,11Z,14Z)-eicosatetraenoate + O2 = (5S)-hydroperoxy-(6E,8Z,11Z,14Z)-eicosatetraenoate. It carries out the reaction (15S)-hydroxy-(5Z,8Z,11Z,13E)-eicosatetraenoate + O2 = (5S)-hydroperoxy-(15S)-hydroxy-(6E,8Z,11Z,13E)-eicosatetraenoate. The catalysed reaction is (5S)-hydroperoxy-(6E,8Z,11Z,14Z)-eicosatetraenoate = leukotriene A4 + H2O. It catalyses the reaction (5Z,8Z,11Z,14Z)-eicosatetraenoate + O2 = (8S)-hydroperoxy-(5Z,9E,11Z,14Z)-eicosatetraenoate. The enzyme catalyses (5Z,8Z,11Z,14Z)-eicosatetraenoate + O2 = (12S)-hydroperoxy-(5Z,8Z,10E,14Z)-eicosatetraenoate. It carries out the reaction (5Z,8Z)-eicosadienoate + O2 = (5S)-hydroperoxy-(6E,8Z)-eicosadienoate. The catalysed reaction is (12S)-hydroxy-(5Z,8Z,10E,14Z)-eicosatetraenoate + O2 = (5S)-hydroperoxy-(12S)-hydroxy-(6E,8Z,10E,14Z)-eicosatetraenoate. It catalyses the reaction (5Z,8Z,11Z,14Z,17Z)-eicosapentaenoate + O2 = 5-hydroperoxy-(6E,8Z,11Z,14Z,17Z)-eicosapentaenoate. The enzyme catalyses (4Z,7Z,10Z,13Z,16Z,19Z)-docosahexaenoate + O2 = (14S)-hydroperoxy-(4Z,7Z,10Z,12E,16Z,19Z)-docosahexaenoate. It carries out the reaction (4Z,7Z,10Z,13Z,16Z,19Z)-docosahexaenoate + O2 = (7S)-hydroperoxy-(4Z,8E,10Z,13Z,16Z,19Z)-docosahexaenoate. The catalysed reaction is (4Z,7Z,10Z,13Z,16Z,19Z)-docosahexaenoate + O2 = (17S)-hydroperoxy-(4Z,7Z,10Z,13Z,15E,19Z)-docosahexaenoate. Its pathway is lipid metabolism; leukotriene A4 biosynthesis. Catalyzes the oxygenation of arachidonate to 5-hydroperoxyeicosatetraenoate (5-HPETE) followed by the dehydration to 5,6- epoxyeicosatetraenoate (Leukotriene A4/LTA4), the first two steps in the biosynthesis of leukotrienes, which are potent mediators of inflammation. Also catalyzes the oxygenation of arachidonate into 8-hydroperoxyicosatetraenoate (8-HPETE) and 12-hydroperoxyicosatetraenoate (12-HPETE). Displays lipoxin synthase activity being able to convert (15S)-HETE into a conjugate tetraene. Although arachidonate is the preferred substrate, this enzyme can also metabolize oxidized fatty acids derived from arachidonate such as (15S)-HETE, eicosapentaenoate (EPA) such as (18R)- and (18S)-HEPE or docosahexaenoate (DHA) which lead to the formation of specialized pro-resolving mediators (SPM) lipoxin and resolvins E and D respectively, therefore it participates in anti-inflammatory responses. Oxidation of DHA directly inhibits endothelial cell proliferation and sprouting angiogenesis via peroxisome proliferator-activated receptor gamma (PPARgamma). It does not catalyze the oxygenation of linoleic acid and does not convert (5S)-HETE to lipoxin isomers. In addition to inflammatory processes, it participates in dendritic cell migration, wound healing through an antioxidant mechanism based on heme oxygenase-1 (HO-1) regulation expression, monocyte adhesion to the endothelium via ITGAM expression on monocytes. Moreover, it helps establish an adaptive humoral immunity by regulating primary resting B cells and follicular helper T cells and participates in the CD40-induced production of reactive oxygen species (ROS) after CD40 ligation in B cells through interaction with PIK3R1 that bridges ALOX5 with CD40. May also play a role in glucose homeostasis, regulation of insulin secretion and palmitic acid-induced insulin resistance via AMPK. Can regulate bone mineralization and fat cell differentiation increases in induced pluripotent stem cells. The chain is Polyunsaturated fatty acid 5-lipoxygenase from Mesocricetus auratus (Golden hamster).